Reading from the N-terminus, the 431-residue chain is MSEPFSTILGTDGSGGRCKYLNKGIVGLGSYGEGYVAERVEDGSLCVAKVMDLSKMSRRDKRYAQSEIKYPTNCNHPNIIRYIEDHEENDRLLIVMEFADSGNLDEQIKPWGTGDARYFQEHEALFLFLQLCLALDYIHSHKMLHRDIKSANVLLTSTGLVKLGDFGFSHQYEDTVSGVVASTFCGTPYYLAPELWNNLRYNKKADVWSLGVLLYEIMGMKKPFSASNLKGLMSKVLAGTYAPLPDSFSSEFKRVVDGILVADPNDRPSVRENFQIPYINKGLKLFVQALKKNERILDSVKEVLVSQVSEILSSEVSPDAHRFLESQINYDVTHRGHVNKLGGGNGKSWKPRFLQIVRGQLILTDDEEGNNPKGLNLEQVQGACPVPYSTAKRDFVFALNTVGGEGMWFQAVSHGDMEMWVHAIQRGIGVA.

Positions 20 to 279 (YLNKGIVGLG…VRENFQIPYI (260 aa)) constitute a Protein kinase domain. ATP contacts are provided by residues 26 to 34 (VGLGSYGEG) and K49. D147 acts as the Proton acceptor in catalysis. The region spanning 331-429 (DVTHRGHVNK…WVHAIQRGIG (99 aa)) is the PH domain.

Belongs to the protein kinase superfamily. Ser/Thr protein kinase family.

The enzyme catalyses L-seryl-[protein] + ATP = O-phospho-L-seryl-[protein] + ADP + H(+). It carries out the reaction L-threonyl-[protein] + ATP = O-phospho-L-threonyl-[protein] + ADP + H(+). In Trypanosoma brucei brucei, this protein is Putative serine/threonine-protein kinase B (NRKB).